Reading from the N-terminus, the 271-residue chain is Murein DD-endopeptidase MepH (271 aa).

Positions 1-27 (MARINRISITLCALLFTTLPLTPMAHA) are cleaved as a signal peptide. The segment at 27-102 (ASKQARESSA…KHAVNKTASA (76 aa)) is disordered. A compositionally biased stretch (basic residues) spans 55–64 (KTQKTAKKAA). The span at 65–86 (SKSTTKSKTASSVKKSSITASK) shows a compositional bias: low complexity. The NlpC/P60 domain occupies 138 to 265 (QKATKVAMNK…RHYVGARRVM (128 aa)). Residue Cys-169 is the Nucleophile of the active site. His-224 serves as the catalytic Proton acceptor. Gln-236 is a catalytic residue.

This sequence belongs to the peptidase C40 family.

It functions in the pathway cell wall biogenesis; cell wall polysaccharide biosynthesis. Functionally, a murein DD-endopeptidase with specificity for D-Ala-meso-diaminopimelic acid (mDAP) cross-links. Its role is probably to cleave D-Ala-mDAP cross-links to allow insertion of new glycans and thus cell wall expansion. Functionally redundant with MepM and MepH. Partially suppresses an mepS disruption mutant. The polypeptide is Murein DD-endopeptidase MepH (mepH) (Escherichia coli (strain K12)).